A 91-amino-acid chain; its full sequence is uncharacterized protein (91 aa).

Residues 7–23 traverse the membrane as a helical segment; sequence IALVGVVVVLFGALRYQ.

It localises to the membrane. This is an uncharacterized protein from Haemophilus influenzae (strain ATCC 51907 / DSM 11121 / KW20 / Rd).